The sequence spans 120 residues: Small ribosomal subunit protein uS11 (120 aa).

The protein belongs to the universal ribosomal protein uS11 family. As to quaternary structure, part of the 30S ribosomal subunit. Interacts with proteins S7 and S18. Binds to IF-3.

Located on the platform of the 30S subunit, it bridges several disparate RNA helices of the 16S rRNA. Forms part of the Shine-Dalgarno cleft in the 70S ribosome. In Neorickettsia sennetsu (strain ATCC VR-367 / Miyayama) (Ehrlichia sennetsu), this protein is Small ribosomal subunit protein uS11.